The sequence spans 416 residues: Enolase (416 aa).

Gln-162 is a (2R)-2-phosphoglycerate binding site. Glu-204 (proton donor) is an active-site residue. Residues Asp-241, Glu-282, and Asp-309 each contribute to the Mg(2+) site. Residues Lys-334, Arg-363, Ser-364, and Lys-385 each coordinate (2R)-2-phosphoglycerate. Lys-334 acts as the Proton acceptor in catalysis.

Belongs to the enolase family. Requires Mg(2+) as cofactor.

It is found in the cytoplasm. Its subcellular location is the secreted. The protein localises to the cell surface. It catalyses the reaction (2R)-2-phosphoglycerate = phosphoenolpyruvate + H2O. The protein operates within carbohydrate degradation; glycolysis; pyruvate from D-glyceraldehyde 3-phosphate: step 4/5. In terms of biological role, catalyzes the reversible conversion of 2-phosphoglycerate (2-PG) into phosphoenolpyruvate (PEP). It is essential for the degradation of carbohydrates via glycolysis. This Campylobacter concisus (strain 13826) protein is Enolase.